A 498-amino-acid chain; its full sequence is ATP synthase subunit beta, chloroplastic (498 aa).

172–179 (GGAGVGKT) provides a ligand contact to ATP.

It belongs to the ATPase alpha/beta chains family. As to quaternary structure, F-type ATPases have 2 components, CF(1) - the catalytic core - and CF(0) - the membrane proton channel. CF(1) has five subunits: alpha(3), beta(3), gamma(1), delta(1), epsilon(1). CF(0) has four main subunits: a(1), b(1), b'(1) and c(9-12).

It localises to the plastid. It is found in the chloroplast thylakoid membrane. It catalyses the reaction ATP + H2O + 4 H(+)(in) = ADP + phosphate + 5 H(+)(out). Functionally, produces ATP from ADP in the presence of a proton gradient across the membrane. The catalytic sites are hosted primarily by the beta subunits. This Trochodendron aralioides (Wheel tree) protein is ATP synthase subunit beta, chloroplastic.